Consider the following 355-residue polypeptide: MGSLEKERTTTGWAARDPSGVLSPYTYSLRNTGPEDLYIKVLSCGICHSDIHQIKNDLGMSHYPMVPGHEVVGEVLEVGSEVTKYRVGDRVGTGIVVGCCRSCGPCNSDQEQYCNKKIWNYNDVYTDGKPTQGGFAGEIVVGQRFVVKIPDGLESEQDAVMCAGVTVYSPLVRFGLKQSGLRGGILGLGGVGHMGVKIAKAMGHHVTVISSSDKKRTEALEHLGADAYLVSSDENGMKEATDSLDYIFDTIPVVHPLEPYLALLKLDGKLILTGVINAPLQFISPMVMLGRKSITGSFIGSMKETEEMLEFCKEKGLTSQIEVIKMDYVNTALERLEKNDVRYRFVVDVAGSKLD.

A Zn(2+)-binding site is contributed by cysteine 47. Serine 49 lines the NADP(+) pocket. 7 residues coordinate Zn(2+): histidine 69, glutamate 70, cysteine 100, cysteine 103, cysteine 106, cysteine 114, and cysteine 162. NADP(+)-binding positions include threonine 166, 187-192, 210-215, threonine 250, glycine 274, and 297-299; these read GLGGVG, SSSDKK, and SFI.

It belongs to the zinc-containing alcohol dehydrogenase family. Homodimer. Requires Zn(2+) as cofactor.

The enzyme catalyses (E)-cinnamyl alcohol + NADP(+) = (E)-cinnamaldehyde + NADPH + H(+). The catalysed reaction is (E)-coniferol + NADP(+) = (E)-coniferaldehyde + NADPH + H(+). It catalyses the reaction (E)-sinapyl alcohol + NADP(+) = (E)-sinapaldehyde + NADPH + H(+). It carries out the reaction (E)-4-coumaroyl alcohol + NADP(+) = (E)-4-coumaraldehyde + NADPH + H(+). The enzyme catalyses (E)-caffeyl alcohol + NADP(+) = (E)-caffeyl aldehyde + NADPH + H(+). It functions in the pathway aromatic compound metabolism; phenylpropanoid biosynthesis. Its function is as follows. Involved in lignin biosynthesis. Catalyzes the final step specific for the production of lignin monomers. Catalyzes the NADPH-dependent reduction of coniferaldehyde, 5-hydroxyconiferaldehyde, sinapaldehyde, 4-coumaraldehyde and caffeyl aldehyde to their respective alcohols. The chain is Probable cinnamyl alcohol dehydrogenase (CAD1) from Eucalyptus botryoides (Southern mahogany).